A 396-amino-acid chain; its full sequence is S-adenosylmethionine synthase (396 aa).

His16 contacts ATP. Mg(2+) is bound at residue Asp18. A K(+)-binding site is contributed by Glu44. The L-methionine site is built by Glu57 and Gln100. The interval 100–110 (QSPDINQGVDR) is flexible loop. ATP-binding positions include 165-167 (DAK), Asp240, 246-247 (RK), Ala263, and Lys267. Asp240 lines the L-methionine pocket. Residue Lys271 participates in L-methionine binding.

Belongs to the AdoMet synthase family. Homotetramer; dimer of dimers. The cofactor is Mg(2+). K(+) serves as cofactor.

The protein resides in the cytoplasm. The catalysed reaction is L-methionine + ATP + H2O = S-adenosyl-L-methionine + phosphate + diphosphate. The protein operates within amino-acid biosynthesis; S-adenosyl-L-methionine biosynthesis; S-adenosyl-L-methionine from L-methionine: step 1/1. In terms of biological role, catalyzes the formation of S-adenosylmethionine (AdoMet) from methionine and ATP. The overall synthetic reaction is composed of two sequential steps, AdoMet formation and the subsequent tripolyphosphate hydrolysis which occurs prior to release of AdoMet from the enzyme. The sequence is that of S-adenosylmethionine synthase from Pseudomonas fluorescens (strain Pf0-1).